The sequence spans 120 residues: Crustacean hyperglycemic hormones 1 (120 aa).

A signal peptide spans methionine 1–alanine 24. Cystine bridges form between cysteine 53/cysteine 89, cysteine 69/cysteine 85, and cysteine 72/cysteine 98. Residue valine 118 is modified to Valine amide.

It belongs to the arthropod CHH/MIH/GIH/VIH hormone family. Produced by the medulla terminalis X-organ in the eyestalks and transported to the sinus gland where they are stored and released.

Its subcellular location is the secreted. Hormone found in the sinus gland of isopods and decapods which controls the blood sugar level. Has a secretagogue action over the amylase released from the midgut gland. May act as a stress hormone and may be involved in the control of molting and reproduction. This Penaeus japonicus (Kuruma prawn) protein is Crustacean hyperglycemic hormones 1.